The primary structure comprises 245 residues: 1-(5-phosphoribosyl)-5-[(5-phosphoribosylamino)methylideneamino] imidazole-4-carboxamide isomerase (245 aa).

Asp7 serves as the catalytic Proton acceptor. Asp129 (proton donor) is an active-site residue.

This sequence belongs to the HisA/HisF family.

The protein resides in the cytoplasm. It catalyses the reaction 1-(5-phospho-beta-D-ribosyl)-5-[(5-phospho-beta-D-ribosylamino)methylideneamino]imidazole-4-carboxamide = 5-[(5-phospho-1-deoxy-D-ribulos-1-ylimino)methylamino]-1-(5-phospho-beta-D-ribosyl)imidazole-4-carboxamide. Its pathway is amino-acid biosynthesis; L-histidine biosynthesis; L-histidine from 5-phospho-alpha-D-ribose 1-diphosphate: step 4/9. This is 1-(5-phosphoribosyl)-5-[(5-phosphoribosylamino)methylideneamino] imidazole-4-carboxamide isomerase from Shewanella halifaxensis (strain HAW-EB4).